Reading from the N-terminus, the 358-residue chain is Alternative oxidase, mitochondrial (358 aa).

Residues 152–172 (LIRMVFLESVAGVPGMVAGML) traverse the membrane as a helical segment. Residues glutamate 159, glutamate 198, and histidine 201 each contribute to the Fe cation site. The chain crosses the membrane as a helical span at residues 217-237 (FMIIGAQGVFFNSMFLSYLIS). Residues glutamate 249, glutamate 250, glutamate 306, and histidine 309 each coordinate Fe cation.

This sequence belongs to the alternative oxidase family. It depends on Fe cation as a cofactor.

The protein localises to the mitochondrion inner membrane. Catalyzes cyanide-resistant oxygen consumption. May increase respiration when the cytochrome respiratory pathway is restricted, or in response to low temperatures. The protein is Alternative oxidase, mitochondrial of Blumeria graminis (Powdery mildew).